A 477-amino-acid chain; its full sequence is Tyrosine--tRNA ligase, mitochondrial (477 aa).

The transit peptide at 1 to 16 (MAAPILRSFSWGRWSG) directs the protein to the mitochondrion. Y77 serves as a coordination point for L-tyrosine. D81 lines the ATP pocket. Positions 82–91 (PTADSLHVGH) match the 'HIGH' region motif. Positions 121, 221, 225, and 228 each coordinate L-tyrosine. 244-246 (GSD) lines the ATP pocket. Q247 lines the L-tyrosine pocket. The ATP site is built by I274 and K284. Residues 281–285 (KLGKS) carry the 'KMSKS' region motif. Residues K355 and K367 each carry the N6-acetyllysine modification.

Belongs to the class-I aminoacyl-tRNA synthetase family. As to quaternary structure, homodimer.

It is found in the mitochondrion matrix. It carries out the reaction tRNA(Tyr) + L-tyrosine + ATP = L-tyrosyl-tRNA(Tyr) + AMP + diphosphate + H(+). Its function is as follows. Catalyzes the attachment of tyrosine to tRNA(Tyr) in a two-step reaction: tyrosine is first activated by ATP to form Tyr-AMP and then transferred to the acceptor end of tRNA(Tyr). This is Tyrosine--tRNA ligase, mitochondrial (YARS2) from Homo sapiens (Human).